Consider the following 130-residue polypeptide: MPEFKVVVADPEKARSYQVEVKGEDAEKLIGKRIGDVIDGEIVGLPGYKLKITGGTDKDGFPMRPDIHGPVRVRLLLSGPPGFRPERKGERRRKTVRGNTISEDIVQVNTVIVEYGDKPVEELLGEGGEE.

The tract at residues serine 78 to glycine 98 is disordered.

It belongs to the eukaryotic ribosomal protein eS6 family.

This chain is Small ribosomal subunit protein eS6, found in Methanopyrus kandleri (strain AV19 / DSM 6324 / JCM 9639 / NBRC 100938).